The primary structure comprises 632 residues: 2-hydroxyacyl-CoA lyase 2 (632 aa).

The chain crosses the membrane as a helical span at residues 13 to 33 (FFPSFLLLAFGTLVAAVLGVA). E98 is a thiamine diphosphate binding site. Position 369 is a phosphoserine (S369). The thiamine pyrophosphate binding stretch occupies residues 470-550 (DFVATAAYLV…VIALVGNDAG (81 aa)). Mg(2+) is bound by residues D521 and N547.

It belongs to the TPP enzyme family. Requires Mg(2+) as cofactor. Thiamine diphosphate is required as a cofactor.

Its subcellular location is the endoplasmic reticulum membrane. It catalyses the reaction 2-hydroxyoctadecanoyl-CoA = heptadecanal + formyl-CoA. The enzyme catalyses (2R)-hydroxyhexadecanoyl-CoA = pentadecanal + formyl-CoA. Its function is as follows. Endoplasmic reticulum 2-OH acyl-CoA lyase involved in the cleavage (C1 removal) reaction in the fatty acid alpha-oxydation in a thiamine pyrophosphate (TPP)-dependent manner. Involved in the phytosphingosine degradation pathway. The protein is 2-hydroxyacyl-CoA lyase 2 (Ilvbl) of Mus musculus (Mouse).